The following is a 30-amino-acid chain: Cyclotide hyen-F (30 aa).

The cyclopeptide (Gly-Asn) cross-link spans 1-30 (GLPCGESCVYIPCISTVLGCSCSNKVCYRN). 3 disulfides stabilise this stretch: Cys-4–Cys-20, Cys-8–Cys-22, and Cys-13–Cys-27.

Post-translationally, this is a cyclic peptide. In terms of tissue distribution, detected in seeds (at protein level).

In terms of biological role, probably participates in a plant defense mechanism. The sequence is that of Cyclotide hyen-F from Pigea enneasperma (Spade flower).